A 320-amino-acid polypeptide reads, in one-letter code: Ferrochelatase (320 aa).

Residues His-194 and Glu-275 each contribute to the Fe cation site.

Belongs to the ferrochelatase family. In terms of assembly, monomer.

It is found in the cytoplasm. It catalyses the reaction heme b + 2 H(+) = protoporphyrin IX + Fe(2+). The protein operates within porphyrin-containing compound metabolism; protoheme biosynthesis; protoheme from protoporphyrin-IX: step 1/1. Catalyzes the ferrous insertion into protoporphyrin IX. The protein is Ferrochelatase of Escherichia coli O9:H4 (strain HS).